The sequence spans 246 residues: PARP-type zinc finger-containing protein C2A9.07c (246 aa).

The PARP-type; degenerate zinc-finger motif lies at 8–99; the sequence is YRVELAKTGR…EKILRAFEQG (92 aa). Basic and acidic residues predominate over residues 103-126; it reads EEDEERCRKMASDASEEKDRKIEE. The disordered stretch occupies residues 103-246; that stretch reads EEDEERCRKM…ESGNEYSDSD (144 aa). A Phosphothreonine modification is found at Thr130. Phosphoserine is present on Ser131. Basic residues predominate over residues 157-168; the sequence is NKKHKAERKRSP. Acidic residues predominate over residues 175 to 184; it reads LEDDEEIEDV. A compositionally biased stretch (basic and acidic residues) spans 185 to 196; the sequence is ASDKDEEEKPWS. Residues 197–215 are compositionally biased toward acidic residues; it reads GDEEDDDELVVKDSEDETE. Phosphoserine is present on residues Ser243 and Ser245.

The protein localises to the nucleus. It is found in the mitochondrion. In Schizosaccharomyces pombe (strain 972 / ATCC 24843) (Fission yeast), this protein is PARP-type zinc finger-containing protein C2A9.07c.